The sequence spans 306 residues: 2-dehydro-3-deoxy-D-gluconate/2-dehydro-3-deoxy-phosphogluconate aldolase (306 aa).

Substrate-binding positions include 61–62, 148–150, and 173–175; these read TT, YNY, and KDT. Lysine 173 serves as the catalytic Schiff-base intermediate with substrate.

This sequence belongs to the DapA family. KDPG aldolase subfamily. Homotetramer; dimer of dimers.

The enzyme catalyses 2-dehydro-3-deoxy-6-phospho-D-gluconate = D-glyceraldehyde 3-phosphate + pyruvate. It catalyses the reaction 2-dehydro-3-deoxy-D-gluconate = D-glyceraldehyde + pyruvate. The protein operates within carbohydrate acid metabolism; 2-dehydro-3-deoxy-D-gluconate degradation; D-glyceraldehyde 3-phosphate and pyruvate from 2-dehydro-3-deoxy-D-gluconate: step 2/2. Functionally, involved in the degradation of glucose via the Entner-Doudoroff pathway. Catalyzes the reversible cleavage of 2-keto-3-deoxy-6-phosphogluconate (KDPG) and 2-keto-3-deoxygluconate (KDG) forming pyruvate and glyceraldehyde 3-phosphate or glyceraldehyde, respectively. It is not able to use 2-keto-3-deoxy-6-phosphogalactonate (KDPGal) and 2-keto-3-deoxygalactonate (KDGal) as substrate. This is 2-dehydro-3-deoxy-D-gluconate/2-dehydro-3-deoxy-phosphogluconate aldolase (kdgA) from Thermoproteus tenax.